We begin with the raw amino-acid sequence, 527 residues long: N-acetylglucosamine-1-phosphodiester alpha-N-acetylglucosaminidase (527 aa).

The signal sequence occupies residues 1-25 (MASSMGRFLLFFIALRGFLLEASGD). A propeptide spans 26–49 (FGSGASRDDDVLLPYSRARARLAR) (removed in mature form). The Lumenal portion of the chain corresponds to 50-463 (DCTRVHAGRL…SLLTRTTWLA (414 aa)). 5 disulfide bridges follow: C116–C149, C133–C324, C308–C315, C363–C374, and C381–C390. N-linked (GlcNAc...) asparagine glycosylation is found at N209, N215, and N297. Residues 359–391 (DKLDCGPANCSQHGLCTETGCRCEAGWTGSNCS) enclose the EGF-like domain. 3 N-linked (GlcNAc...) asparagine glycosylation sites follow: N367, N389, and N421. The helical transmembrane segment at 464–484 (ITLALAFLLLISTAANVSLFL) threads the bilayer. Over 485–527 (GSRAARRRHLDGAYVYHPLQEVNGEHPAAEKEQLGDSSNPFKD) the chain is Cytoplasmic. The segment at 498-505 (YVYHPLQE) is mediates the interaction with AP4M1. The short motif at 500–503 (YHPL) is the Tyrosine-based internalization motif element. Residues 523 to 527 (NPFKD) carry the NPF internalization motif motif.

Homotetramer arranged as two disulfide-linked homodimers. Interacts with AP4M1. Glycosylated. Contains complex N-linked oligosaccharides with appreciable amounts of sialic acid. Post-translationally, the precursor is cleaved and activated in the trans-Golgi network by a furin endopeptidase.

The protein localises to the golgi apparatus. It localises to the golgi stack membrane. It is found in the trans-Golgi network. The catalysed reaction is N(4)-[6-(N-acetyl-alpha-D-glucosaminyl-1-phospho)-alpha-D-mannosyl-(1-&gt;2)-alpha-D-mannosyl-(glycan)]-L-asparaginyl-[protein] + H2O = N(4)-[6-phospho-alpha-D-mannosyl-(1-&gt;2)-alpha-D-mannosyl-(glycan)]-L-asparaginyl-[protein] + N-acetyl-D-glucosamine + H(+). It participates in protein modification; protein glycosylation. In terms of biological role, catalyzes the second step in the formation of the mannose 6-phosphate targeting signal on lysosomal enzyme oligosaccharides by removing GlcNAc residues from GlcNAc-alpha-P-mannose moieties, which are formed in the first step. Also hydrolyzes UDP-GlcNAc, a sugar donor for Golgi N-acetylglucosaminyltransferases. The protein is N-acetylglucosamine-1-phosphodiester alpha-N-acetylglucosaminidase (NAGPA) of Bos taurus (Bovine).